The following is a 370-amino-acid chain: Prolactin-releasing peptide receptor (370 aa).

Topologically, residues 1 to 62 are extracellular; the sequence is MASLPTQGPA…LQLVHQLKGL (62 aa). Residues Asn-27 and Asn-36 are each glycosylated (N-linked (GlcNAc...) asparagine). A helical transmembrane segment spans residues 63–83; the sequence is IVLLYSIVVVVGLVGNCLLVL. Residues 84 to 101 are Cytoplasmic-facing; it reads VIARVRRLHNVTNFLIGN. The helical transmembrane segment at 102-122 threads the bilayer; the sequence is LALSDVLMCTACVPLTLAYAF. Residues 123–126 are Extracellular-facing; sequence EPRG. The chain crosses the membrane as a helical span at residues 127–147; that stretch reads WVFGGGLCHLVFFLQPVTVYV. A disulfide bond links Cys-134 and Cys-211. Over 148–175 the chain is Cytoplasmic; it reads SVFTLTTIAVDRYVVLVHPLRRRISLRF. Residues 176–196 traverse the membrane as a helical segment; the sequence is SAYAVLAIWALSAVLALPAAL. Residues 197–225 lie on the Extracellular side of the membrane; sequence HTYHVELKPHRVRLCEEFWGSQERQRQLY. The chain crosses the membrane as a helical span at residues 226 to 246; it reads AWGLLLVTYLLPLLVILLSYV. Residues 247 to 276 are Cytoplasmic-facing; the sequence is RVSVNLRNRVVPGCVTQSQADWDRARRRRT. The chain crosses the membrane as a helical span at residues 277–297; it reads FCLLVVVVVVFAVCWLPLHVF. At 298–317 the chain is on the extracellular side; sequence NLLRDLDPHAIDPYAFGLVQ. A helical transmembrane segment spans residues 318 to 338; sequence LLCHWLAMSSACYNPFIYAWL. Residues 339–369 are Cytoplasmic-facing; that stretch reads HDSFREELRKLLLAWPRKIAPHGQSMTVSVV. Positions 365–370 are required for interaction with GRIP1, GRIP2 and PICK1; that stretch reads TVSVVI.

It belongs to the G-protein coupled receptor 1 family. Interacts through its C-terminal region with the PDZ domain-containing proteins GRIP1, GRIP2 and PICK1. Interacts with PDZ domains 4 and 5 of GRIP1 and with the PDZ domain of PICK1.

The protein localises to the cell membrane. Functionally, receptor for prolactin-releasing peptide (PrRP). Implicated in lactation, regulation of food intake and pain-signal processing. This Bos taurus (Bovine) protein is Prolactin-releasing peptide receptor (PRLHR).